Here is a 150-residue protein sequence, read N- to C-terminus: 3-hydroxyacyl-[acyl-carrier-protein] dehydratase FabZ (150 aa).

His-51 is an active-site residue.

The protein belongs to the thioester dehydratase family. FabZ subfamily.

The protein resides in the cytoplasm. The enzyme catalyses a (3R)-hydroxyacyl-[ACP] = a (2E)-enoyl-[ACP] + H2O. Functionally, involved in unsaturated fatty acids biosynthesis. Catalyzes the dehydration of short chain beta-hydroxyacyl-ACPs and long chain saturated and unsaturated beta-hydroxyacyl-ACPs. The chain is 3-hydroxyacyl-[acyl-carrier-protein] dehydratase FabZ from Legionella pneumophila (strain Paris).